The primary structure comprises 369 residues: Glutamate 5-kinase (369 aa).

Position 14 (Lys-14) interacts with ATP. Positions 54, 141, and 153 each coordinate substrate. Residues 173 to 174 (SD) and 215 to 221 (TGGMVTK) contribute to the ATP site. The region spanning 277 to 355 (RGRLHLDPGA…SELATALGPA (79 aa)) is the PUA domain.

Belongs to the glutamate 5-kinase family.

It localises to the cytoplasm. The enzyme catalyses L-glutamate + ATP = L-glutamyl 5-phosphate + ADP. Its pathway is amino-acid biosynthesis; L-proline biosynthesis; L-glutamate 5-semialdehyde from L-glutamate: step 1/2. In terms of biological role, catalyzes the transfer of a phosphate group to glutamate to form L-glutamate 5-phosphate. The protein is Glutamate 5-kinase of Salinispora arenicola (strain CNS-205).